The following is a 307-amino-acid chain: Transmembrane and coiled-coil domain-containing protein 5B (307 aa).

The stretch at 20 to 212 forms a coiled coil; sequence TLEAIKQNLK…SKAQNDSSQV (193 aa). Residues 246–268 traverse the membrane as a helical segment; it reads YLFFMVMIVIRLLGYVFFHLQYV.

This sequence belongs to the TMCO5 family.

Its subcellular location is the membrane. The polypeptide is Transmembrane and coiled-coil domain-containing protein 5B (Tmco5b) (Mus musculus (Mouse)).